We begin with the raw amino-acid sequence, 246 residues long: Orotidine 5'-phosphate decarboxylase (246 aa).

Substrate contacts are provided by residues Asp-22, Lys-44, 71-80 (DLKYHDIPHT), Thr-130, Arg-191, Gln-201, Gly-221, and Arg-222. Lys-73 functions as the Proton donor in the catalytic mechanism.

It belongs to the OMP decarboxylase family. Type 1 subfamily. As to quaternary structure, homodimer.

It catalyses the reaction orotidine 5'-phosphate + H(+) = UMP + CO2. It participates in pyrimidine metabolism; UMP biosynthesis via de novo pathway; UMP from orotate: step 2/2. Catalyzes the decarboxylation of orotidine 5'-monophosphate (OMP) to uridine 5'-monophosphate (UMP). This Neisseria meningitidis serogroup B (strain ATCC BAA-335 / MC58) protein is Orotidine 5'-phosphate decarboxylase.